A 133-amino-acid polypeptide reads, in one-letter code: MADERTSDSVKTRYDIALMKLNDIKIAVFRDSLSTYVEQKTGLTIQFNWPKSRCLVISTLCKIPFPTKSAAELQEMCKYQCFVSVLWCVILVFVVKIKLFFLLNKVRYYFAARKDCNYLDMFLSGERRLVMCA.

The helical transmembrane segment at 82–102 (FVSVLWCVILVFVVKIKLFFL) threads the bilayer.

It localises to the membrane. The protein is Protein U17 (U17/U16) of Homo sapiens (Human).